We begin with the raw amino-acid sequence, 392 residues long: MTATRHFLLAAGGTGGHMLPAYALADELIARGHRVALVSDDRGLKIPGAPAELETHVLPAGRASGGPLGWLKGALAIRKGRRMAIELIDDFDPAVVVGFGGYPSLPSLLAAGATKRPRVIHEQNAVLGRVNRLMAPRVDAVAVAYHHIQRYPAGHELKMHITGNPVRDEIVAIREEGFPPLLEDGIFRLLVVGGSLGATVLSEVVPAAIAMLPRALLDRLQVVQQCREDDLEAVRARYAELGVAAECAPYIKDFPERLRWAHMVIARAGASTVAELACAGRPAIFVPYPHAMDDHQTYNVVDLVEAGGAISFRQSDFIPAEVAKHIQRMAVEPGVLEEAAERAASCGLPDATRDLADLVESFAAPPMMDVIRVGASLPRAASGIAAARREAK.

UDP-N-acetyl-alpha-D-glucosamine contacts are provided by residues 14 to 16 (TGG), asparagine 124, arginine 167, serine 195, isoleucine 251, and glutamine 296.

This sequence belongs to the glycosyltransferase 28 family. MurG subfamily.

The protein resides in the cell inner membrane. It carries out the reaction di-trans,octa-cis-undecaprenyl diphospho-N-acetyl-alpha-D-muramoyl-L-alanyl-D-glutamyl-meso-2,6-diaminopimeloyl-D-alanyl-D-alanine + UDP-N-acetyl-alpha-D-glucosamine = di-trans,octa-cis-undecaprenyl diphospho-[N-acetyl-alpha-D-glucosaminyl-(1-&gt;4)]-N-acetyl-alpha-D-muramoyl-L-alanyl-D-glutamyl-meso-2,6-diaminopimeloyl-D-alanyl-D-alanine + UDP + H(+). Its pathway is cell wall biogenesis; peptidoglycan biosynthesis. Cell wall formation. Catalyzes the transfer of a GlcNAc subunit on undecaprenyl-pyrophosphoryl-MurNAc-pentapeptide (lipid intermediate I) to form undecaprenyl-pyrophosphoryl-MurNAc-(pentapeptide)GlcNAc (lipid intermediate II). The chain is UDP-N-acetylglucosamine--N-acetylmuramyl-(pentapeptide) pyrophosphoryl-undecaprenol N-acetylglucosamine transferase from Sphingopyxis alaskensis (strain DSM 13593 / LMG 18877 / RB2256) (Sphingomonas alaskensis).